The chain runs to 1007 residues: Inversin-A (1007 aa).

ANK repeat units lie at residues 9 to 39 (SLAS…VIDQ), 43 to 72 (LGRT…QVNH), 76 to 105 (SGRT…DCTH), 109 to 140 (RDIT…QVDA), 144 to 173 (RKQT…NIGI), 177 to 209 (EGKI…TESL), 216 to 246 (EGRT…NVAP), 250 to 279 (LFRT…SPNI), 284 to 313 (QGAT…VRDE), 317 to 346 (EGRT…ELEV), 352 to 381 (YGGT…QVDA), 385 to 414 (MKHT…KVHL), 418 to 447 (DGRS…NPDA), 451 to 480 (EGRT…DPNI), 484 to 513 (NGRT…FPNQ), and 519 to 549 (ERYT…SIAA). A D-box 1 motif is present at residues 486-494 (RTALHWSCN). The region spanning 551–580 (QDIAASKIQAVYKGHKVRRAFQERKNLLMK) is the IQ 1 domain. Composition is skewed to basic and acidic residues over residues 585 to 599 (RKGA…ENRQ) and 608 to 652 (GKQK…HQEE). Disordered regions lie at residues 585–837 (RKGA…KEFS) and 868–893 (SAKS…SALK). The segment covering 684–701 (IQSSPIEHVHTNSIQTRM) has biased composition (polar residues). Positions 702-712 (SPSRTSISHSS) are enriched in low complexity. Over residues 727–745 (NPTQNNTQPRRTSRPQIES) the composition is skewed to polar residues. The span at 751 to 771 (HRIEDLVQKESRRKSHREERK) shows a compositional bias: basic and acidic residues. Residues 772 to 784 (GSHRQRASSHHRL) show a composition bias toward basic residues. Over residues 870–893 (KSGQRPLTETQSPEKACQGSSALK) the composition is skewed to polar residues. Positions 964-972 (RKQLFQRKK) match the D-box 2 motif. An IQ 2 domain is found at 971 to 1000 (KKHAATVIQKAWRTYCIRKSSRKTRHSHLR).

As to quaternary structure, interacts with apc2. Binds calmodulin.

Its subcellular location is the cytoplasm. It localises to the cytoskeleton. Its function is as follows. Required for normal renal development and establishment of left-right axis. Probably acts as a molecular switch between different Wnt signaling pathways. Inhibits the canonical Wnt pathway by targeting cytoplasmic disheveled for degradation by the ubiquitin-proteasome. This suggests that it is required in renal development to oppose the repression of terminal differentiation of tubular epithelial cells by Wnt signaling. Plays a central role in convergent extension movements in gastrulating embryos, a processus regulated by Wnt signaling. The polypeptide is Inversin-A (invs-a) (Xenopus laevis (African clawed frog)).